The sequence spans 144 residues: D-aminoacyl-tRNA deacylase (144 aa).

Positions 136–137 (GP) match the Gly-cisPro motif, important for rejection of L-amino acids motif.

Belongs to the DTD family. As to quaternary structure, homodimer.

The protein resides in the cytoplasm. It catalyses the reaction glycyl-tRNA(Ala) + H2O = tRNA(Ala) + glycine + H(+). The enzyme catalyses a D-aminoacyl-tRNA + H2O = a tRNA + a D-alpha-amino acid + H(+). An aminoacyl-tRNA editing enzyme that deacylates mischarged D-aminoacyl-tRNAs. Also deacylates mischarged glycyl-tRNA(Ala), protecting cells against glycine mischarging by AlaRS. Acts via tRNA-based rather than protein-based catalysis; rejects L-amino acids rather than detecting D-amino acids in the active site. By recycling D-aminoacyl-tRNA to D-amino acids and free tRNA molecules, this enzyme counteracts the toxicity associated with the formation of D-aminoacyl-tRNA entities in vivo and helps enforce protein L-homochirality. This chain is D-aminoacyl-tRNA deacylase, found in Corynebacterium glutamicum (strain R).